The following is a 70-amino-acid chain: Beta-defensin 43 (70 aa).

The N-terminal stretch at 1–22 (MRLLLSILGVLTLLSILPLARS) is a signal peptide. 2 disulfides stabilise this stretch: Cys29/Cys57 and Cys36/Cys50.

It belongs to the beta-defensin family.

The protein resides in the secreted. In terms of biological role, has bactericidal activity. This is Beta-defensin 43 (Defb43) from Rattus norvegicus (Rat).